Reading from the N-terminus, the 104-residue chain is Phosphoribosyl-ATP pyrophosphatase (104 aa).

The protein belongs to the PRA-PH family.

The protein localises to the cytoplasm. The catalysed reaction is 1-(5-phospho-beta-D-ribosyl)-ATP + H2O = 1-(5-phospho-beta-D-ribosyl)-5'-AMP + diphosphate + H(+). Its pathway is amino-acid biosynthesis; L-histidine biosynthesis; L-histidine from 5-phospho-alpha-D-ribose 1-diphosphate: step 2/9. The chain is Phosphoribosyl-ATP pyrophosphatase from Methanocorpusculum labreanum (strain ATCC 43576 / DSM 4855 / Z).